The chain runs to 1250 residues: Immunoglobulin superfamily DCC subclass member 4 (1250 aa).

Residues 1 to 24 (MARGDAGRGRGLLALTFCLLAARG) form the signal peptide. At 25–957 (ELLLPQETTV…SDSLDMHSVT (933 aa)) the chain is on the extracellular side. 4 consecutive Ig-like C2-type domains span residues 29–137 (PQET…TAVV), 143–229 (ADFS…ALLS), 242–330 (QDVV…AELR), and 335–421 (PAIT…ASLA). C57 and C121 are disulfide-bonded. Residues N90, N102, and N157 are each glycosylated (N-linked (GlcNAc...) asparagine). C164 and C212 are disulfide-bonded. A glycan (N-linked (GlcNAc...) asparagine) is linked at N252. Cystine bridges form between C265–C312 and C356–C405. 5 Fibronectin type-III domains span residues 431-525 (APTR…TLDD), 527-623 (PSAA…TPSM), 632-741 (APAE…APAP), 752-845 (PPAH…TLPD), and 850-945 (PPSD…TLQE). The N-linked (GlcNAc...) asparagine glycan is linked to N582. Residues 958–978 (GIIVGVCLGLLCLLACMCAGL) traverse the membrane as a helical segment. Residues 979 to 1250 (RRSPHRESLP…LPRSPVSSSA (272 aa)) lie on the Cytoplasmic side of the membrane. Position 995 is a phosphothreonine (T995). Disordered regions lie at residues 1140–1175 (SASN…DPGQ) and 1215–1250 (PGEV…SSSA).

Belongs to the immunoglobulin superfamily. DCC family.

It is found in the cell membrane. The sequence is that of Immunoglobulin superfamily DCC subclass member 4 (IGDCC4) from Homo sapiens (Human).